The chain runs to 546 residues: RuBisCO large subunit-binding protein subunit alpha, chloroplastic (546 aa).

A chloroplast-targeting transit peptide spans 1–6 (RFSVRA). Residue Ser50 is modified to Phosphoserine.

This sequence belongs to the chaperonin (HSP60) family. As to quaternary structure, oligomer of probably six alpha and six beta subunits.

Its subcellular location is the plastid. It is found in the chloroplast. This protein binds RuBisCO small and large subunits and is implicated in the assembly of the enzyme oligomer. The protein is RuBisCO large subunit-binding protein subunit alpha, chloroplastic of Brassica napus (Rape).